We begin with the raw amino-acid sequence, 995 residues long: Integrator complex subunit 8 (995 aa).

A Phosphothreonine modification is found at threonine 18. Positions 24–29 (WFEFLL) match the WFEF motif motif. TPR repeat units lie at residues 250-288 (CQVC…IAEI), 320-356 (SQQL…SLPV), 570-603 (VYIL…VTEF), and 833-866 (HSWL…CSDF).

Belongs to the Integrator subunit 8 family. In terms of assembly, component of the Integrator complex, composed of core subunits INTS1, INTS2, INTS3, INTS4, INTS5, INTS6, INTS7, INTS8, INTS9/RC74, INTS10, INTS11/CPSF3L, INTS12, INTS13, INTS14 and INTS15. The core complex associates with protein phosphatase 2A subunits PPP2CA and PPP2R1A, to form the Integrator-PP2A (INTAC) complex.

Its subcellular location is the nucleus. The protein resides in the chromosome. Functionally, component of the integrator complex, a multiprotein complex that terminates RNA polymerase II (Pol II) transcription in the promoter-proximal region of genes. The integrator complex provides a quality checkpoint during transcription elongation by driving premature transcription termination of transcripts that are unfavorably configured for transcriptional elongation: the complex terminates transcription by (1) catalyzing dephosphorylation of the C-terminal domain (CTD) of Pol II subunit POLR2A/RPB1 and SUPT5H/SPT5, (2) degrading the exiting nascent RNA transcript via endonuclease activity and (3) promoting the release of Pol II from bound DNA. The integrator complex is also involved in terminating the synthesis of non-coding Pol II transcripts, such as enhancer RNAs (eRNAs), small nuclear RNAs (snRNAs), telomerase RNAs and long non-coding RNAs (lncRNAs). Within the integrator complex, INTS8 is required for the recruitment of protein phosphatase 2A (PP2A) to transcription pause-release checkpoint. This chain is Integrator complex subunit 8, found in Homo sapiens (Human).